The following is an 883-amino-acid chain: Translation initiation factor IF-2 (883 aa).

The disordered stretch occupies residues methionine 1–threonine 259. 2 stretches are compositionally biased toward low complexity: residues lysine 10–lysine 22 and proline 77–serine 89. The span at alanine 113–alanine 184 shows a compositional bias: basic and acidic residues. Over residues glutamate 185–glutamate 218 the composition is skewed to low complexity. Pro residues predominate over residues proline 235–glutamine 244. Residues proline 379–glutamate 548 enclose the tr-type G domain. The G1 stretch occupies residues glycine 388–threonine 395. Residue glycine 388–threonine 395 participates in GTP binding. Residues glycine 413 to histidine 417 are G2. The segment at aspartate 436 to glycine 439 is G3. GTP-binding positions include aspartate 436 to histidine 440 and asparagine 490 to aspartate 493. Residues asparagine 490 to aspartate 493 form a G4 region. A G5 region spans residues serine 526–lysine 528.

This sequence belongs to the TRAFAC class translation factor GTPase superfamily. Classic translation factor GTPase family. IF-2 subfamily.

Its subcellular location is the cytoplasm. Its function is as follows. One of the essential components for the initiation of protein synthesis. Protects formylmethionyl-tRNA from spontaneous hydrolysis and promotes its binding to the 30S ribosomal subunits. Also involved in the hydrolysis of GTP during the formation of the 70S ribosomal complex. This is Translation initiation factor IF-2 from Rhodopseudomonas palustris (strain ATCC BAA-98 / CGA009).